Here is a 203-residue protein sequence, read N- to C-terminus: Endo-type membrane-bound lytic murein transglycosylase A (203 aa).

The first 15 residues, 1-15 (MKLRWFAFLIVLLAG), serve as a signal peptide directing secretion. Cys16 carries the N-palmitoyl cysteine lipid modification. Cys16 is lipidated: S-diacylglycerol cysteine.

The protein belongs to the transglycosylase Slt family.

The protein localises to the cell outer membrane. The enzyme catalyses Endolytic cleavage of the (1-&gt;4)-beta-glycosidic linkage between N-acetylmuramic acid (MurNAc) and N-acetylglucosamine (GlcNAc) residues in peptidoglycan with concomitant formation of a 1,6-anhydrobond in the MurNAc residue.. In terms of biological role, murein-degrading enzyme. May play a role in recycling of muropeptides during cell elongation and/or cell division. Preferentially cleaves at a distance of more than two disaccharide units from the ends of the glycan chain. This is Endo-type membrane-bound lytic murein transglycosylase A from Escherichia coli O127:H6 (strain E2348/69 / EPEC).